Here is a 55-residue protein sequence, read N- to C-terminus: Large ribosomal subunit protein bL33 (55 aa).

The protein belongs to the bacterial ribosomal protein bL33 family.

The sequence is that of Large ribosomal subunit protein bL33 from Dinoroseobacter shibae (strain DSM 16493 / NCIMB 14021 / DFL 12).